We begin with the raw amino-acid sequence, 356 residues long: MRRELLLEKIETYKAIMPWYVLDYYQSKLAVPYSFTTLYEYLKEYKRFFDWLMDADLTQAPKIADIDLSTLEHLTKKDLEAFVLYLRERPSLNTYSTKEGLSQTTINRTLSALSSLYKYLTEEVENDQGEPYFYRNVMKKVSTKKKKETLASRAENIKQKLFLGDETLAFLDYVDKEYEQKLSNRAKSSFRKNKERDLAIISLLLASGVRLSEAVNLDLKDVNLNMMIIEVIRKGGKRDSVNVAGFAKGYLESYLAVRQRRYKAEKQDLAFFLTEYRGVPNRMDASSIEKMVGKYSEDFKIRVTPHKLRHTLATRLYDATKSQVLVSHQLGHSSTQVTDLYTHIVNDEQKNALDNL.

The Core-binding (CB) domain occupies 16–121; it reads IMPWYVLDYY…ALSSLYKYLT (106 aa). One can recognise a Tyr recombinase domain in the interval 169–354; it reads AFLDYVDKEY…VNDEQKNALD (186 aa). Catalysis depends on residues arginine 210, lysine 234, histidine 306, arginine 309, and histidine 332. Tyrosine 341 acts as the O-(3'-phospho-DNA)-tyrosine intermediate in catalysis.

The protein belongs to the 'phage' integrase family. XerS subfamily.

The protein resides in the cytoplasm. Its activity is regulated as follows. FtsK is required for recombination. Its function is as follows. Site-specific tyrosine recombinase, which acts by catalyzing the cutting and rejoining of the recombining DNA molecules. Essential to convert dimers of the bacterial chromosome into monomers to permit their segregation at cell division. This is Tyrosine recombinase XerS from Streptococcus pyogenes serotype M6 (strain ATCC BAA-946 / MGAS10394).